Reading from the N-terminus, the 284-residue chain is Phosphatidylserine decarboxylase proenzyme (284 aa).

Active-site charge relay system; for autoendoproteolytic cleavage activity residues include Asp88, His145, and Ser248. The active-site Schiff-base intermediate with substrate; via pyruvic acid; for decarboxylase activity is the Ser248. The residue at position 248 (Ser248) is a Pyruvic acid (Ser); by autocatalysis.

It belongs to the phosphatidylserine decarboxylase family. PSD-B subfamily. Prokaryotic type I sub-subfamily. Heterodimer of a large membrane-associated beta subunit and a small pyruvoyl-containing alpha subunit. The cofactor is pyruvate. In terms of processing, is synthesized initially as an inactive proenzyme. Formation of the active enzyme involves a self-maturation process in which the active site pyruvoyl group is generated from an internal serine residue via an autocatalytic post-translational modification. Two non-identical subunits are generated from the proenzyme in this reaction, and the pyruvate is formed at the N-terminus of the alpha chain, which is derived from the carboxyl end of the proenzyme. The autoendoproteolytic cleavage occurs by a canonical serine protease mechanism, in which the side chain hydroxyl group of the serine supplies its oxygen atom to form the C-terminus of the beta chain, while the remainder of the serine residue undergoes an oxidative deamination to produce ammonia and the pyruvoyl prosthetic group on the alpha chain. During this reaction, the Ser that is part of the protease active site of the proenzyme becomes the pyruvoyl prosthetic group, which constitutes an essential element of the active site of the mature decarboxylase.

Its subcellular location is the cell membrane. The enzyme catalyses a 1,2-diacyl-sn-glycero-3-phospho-L-serine + H(+) = a 1,2-diacyl-sn-glycero-3-phosphoethanolamine + CO2. Its pathway is phospholipid metabolism; phosphatidylethanolamine biosynthesis; phosphatidylethanolamine from CDP-diacylglycerol: step 2/2. Its function is as follows. Catalyzes the formation of phosphatidylethanolamine (PtdEtn) from phosphatidylserine (PtdSer). This is Phosphatidylserine decarboxylase proenzyme from Delftia acidovorans (strain DSM 14801 / SPH-1).